The primary structure comprises 378 residues: Cln5-like protein 1 (378 aa).

The N-terminal stretch at 1–20 (MNKIIIFILFLISILQSVRG) is a signal peptide. Residues Asn63, Asn93, Asn135, Asn181, Asn220, Asn226, Asn254, and Asn280 are each glycosylated (N-linked (GlcNAc...) asparagine). Residues 308–328 (WIFIIILLSFTTVYLVGGILI) form a helical membrane-spanning segment.

It belongs to the CLN5 family.

The protein resides in the membrane. This chain is Cln5-like protein 1 (cln5la), found in Dictyostelium discoideum (Social amoeba).